We begin with the raw amino-acid sequence, 71 residues long: Protein translocase subunit SecE (71 aa).

A helical transmembrane segment spans residues 43-63 (VAGAGILAVGAIGFIIYVLLT).

This sequence belongs to the SecE/SEC61-gamma family. In terms of assembly, component of the Sec protein translocase complex. Heterotrimer consisting of SecY (alpha), SecG (beta) and SecE (gamma) subunits. The heterotrimers can form oligomers, although 1 heterotrimer is thought to be able to translocate proteins. Interacts with the ribosome. May interact with SecDF, and other proteins may be involved.

The protein resides in the cell membrane. In terms of biological role, essential subunit of the Sec protein translocation channel SecYEG. Clamps together the 2 halves of SecY. May contact the channel plug during translocation. This chain is Protein translocase subunit SecE, found in Methanosarcina acetivorans (strain ATCC 35395 / DSM 2834 / JCM 12185 / C2A).